The following is a 494-amino-acid chain: Glutamyl-tRNA(Gln) amidotransferase subunit A (494 aa).

Residues lysine 79 and serine 154 each act as charge relay system in the active site. Serine 178 acts as the Acyl-ester intermediate in catalysis.

Belongs to the amidase family. GatA subfamily. In terms of assembly, heterotrimer of A, B and C subunits.

The catalysed reaction is L-glutamyl-tRNA(Gln) + L-glutamine + ATP + H2O = L-glutaminyl-tRNA(Gln) + L-glutamate + ADP + phosphate + H(+). Its function is as follows. Allows the formation of correctly charged Gln-tRNA(Gln) through the transamidation of misacylated Glu-tRNA(Gln) in organisms which lack glutaminyl-tRNA synthetase. The reaction takes place in the presence of glutamine and ATP through an activated gamma-phospho-Glu-tRNA(Gln). The sequence is that of Glutamyl-tRNA(Gln) amidotransferase subunit A from Clostridium kluyveri (strain NBRC 12016).